The chain runs to 358 residues: Protein SRG1 (358 aa).

Positions 209 to 309 constitute a Fe2OG dioxygenase domain; sequence SVQSMRMNYY…RLSIATFHNV (101 aa). His-233, Asp-235, and His-290 together coordinate Fe cation.

The protein belongs to the iron/ascorbate-dependent oxidoreductase family. Low expression in roots and leaves.

The polypeptide is Protein SRG1 (SRG1) (Arabidopsis thaliana (Mouse-ear cress)).